The sequence spans 526 residues: MSVRYSSSKQYSSSRSGGGGGGGSSLRISSSKGSLGGGYSSGGFSGGSFSRGSSAGGCFGGSSSIYGGGLGSGFGGGYGSSFGGSYGGSFGGGYGGGGFGGGSFGGGSFGGGLGGGFGDGGLISGNQKITMQNLNDRLASYLDKVRALEESNYELEVKIKEWYEKYGNSRQREPRDYSKYYQTIDDLKNQIFNLTTDNANILIQVDNARLAADDFRLKYENEVTLRQSVEADINGLRRVLDELTLTKTDLEMQIESLTEELAYLKKNHEEEMRDLQNVSTGDVNVEMNAAPGVDLTELLNNMRSQYEQLAEKNRRDAEAWFNEKSKELTTEINSNLEQVSSHKSEITELRRTIQGLEIELQSQLALKQSLEASLAETEGRYCVQLSQIQSQISSLEEQLQQIRAETECQNAEYQQLLDIKIRLENEIQTYRSLLEGEGSSGGGSYGGGRGYGGSSGGGGGGYGGGSSSGGYGGGSSSGGGHGGSSGGSYGGGSSSGGGHGGGSSSGGHKSTTTGSVGESSSKGPRY.

A compositionally biased stretch (low complexity) spans 1–15 (MSVRYSSSKQYSSSR). The interval 1 to 29 (MSVRYSSSKQYSSSRSGGGGGGGSSLRIS) is disordered. A head region spans residues 1 to 126 (MSVRYSSSKQ…FGDGGLISGN (126 aa)). Phosphoserine is present on residues Ser-14, Ser-16, Ser-34, Ser-45, Ser-48, and Ser-151. The interval 127–162 (QKITMQNLNDRLASYLDKVRALEESNYELEVKIKEW) is coil 1A. The 315-residue stretch at 127 to 441 (QKITMQNLND…SLLEGEGSSG (315 aa)) folds into the IF rod domain. Positions 163 to 183 (YEKYGNSRQREPRDYSKYYQT) are linker 1. Residues 184–275 (IDDLKNQIFN…KNHEEEMRDL (92 aa)) are coil 1B. Positions 276 to 298 (QNVSTGDVNVEMNAAPGVDLTEL) are linker 12. A coil 2 region spans residues 299 to 437 (LNNMRSQYEQ…QTYRSLLEGE (139 aa)). The tail stretch occupies residues 438 to 526 (GSSGGGSYGG…GESSSKGPRY (89 aa)). A compositionally biased stretch (gly residues) spans 458–505 (GGGGYGGGSSSGGYGGGSSSGGGHGGSSGGSYGGGSSSGGGHGGGSSS). The interval 458-526 (GGGGYGGGSS…GESSSKGPRY (69 aa)) is disordered. A compositionally biased stretch (low complexity) spans 506–526 (GGHKSTTTGSVGESSSKGPRY).

Belongs to the intermediate filament family. In terms of assembly, heterotetramer of two type I and two type II keratins. Heterodimer with KRT1. Two heterodimers of KRT1 and KRT10 form a heterotetramer. The KRT10 subunit in the heterotetramer is probably disulfide-linked.

The protein resides in the secreted. It localises to the extracellular space. The protein localises to the cell surface. Its subcellular location is the cytoplasm. In terms of biological role, plays a role in the establishment of the epidermal barrier on plantar skin. Involved in the maintenance of cell layer development and keratin filament bundles in suprabasal cells of the epithelium. This Bos taurus (Bovine) protein is Keratin, type I cytoskeletal 10 (KRT10).